The chain runs to 547 residues: Putative cysteine ligase BshC (547 aa).

Residues 462 to 484 (NLAEENLDRVIAQARFLRQKVEH) are a coiled coil.

Belongs to the BshC family.

Functionally, involved in bacillithiol (BSH) biosynthesis. May catalyze the last step of the pathway, the addition of cysteine to glucosamine malate (GlcN-Mal) to generate BSH. The sequence is that of Putative cysteine ligase BshC from Heliobacterium modesticaldum (strain ATCC 51547 / Ice1).